We begin with the raw amino-acid sequence, 160 residues long: SsrA-binding protein (160 aa).

Over residues 138–148 the composition is skewed to basic and acidic residues; the sequence is KRDDIKDREWQ. The interval 138–160 is disordered; the sequence is KRDDIKDREWQTAKSRIMKHANR.

Belongs to the SmpB family.

It is found in the cytoplasm. In terms of biological role, required for rescue of stalled ribosomes mediated by trans-translation. Binds to transfer-messenger RNA (tmRNA), required for stable association of tmRNA with ribosomes. tmRNA and SmpB together mimic tRNA shape, replacing the anticodon stem-loop with SmpB. tmRNA is encoded by the ssrA gene; the 2 termini fold to resemble tRNA(Ala) and it encodes a 'tag peptide', a short internal open reading frame. During trans-translation Ala-aminoacylated tmRNA acts like a tRNA, entering the A-site of stalled ribosomes, displacing the stalled mRNA. The ribosome then switches to translate the ORF on the tmRNA; the nascent peptide is terminated with the 'tag peptide' encoded by the tmRNA and targeted for degradation. The ribosome is freed to recommence translation, which seems to be the essential function of trans-translation. The polypeptide is SsrA-binding protein (Serratia proteamaculans (strain 568)).